Here is a 197-residue protein sequence, read N- to C-terminus: MIIGITGGIASGKSTVVKVIRKAGYQVIDADQVVHDLQEKGGRLYEALREAFGNQILKADGELDRTKLSEMLFSNPDNMATSSAIQNQIIKEELAAKRDHLAQSQAIFFMDIPILMELGYQDWFDAIWLVYVDAQTQLQRLMARNRLDKGKARQRIASQLPIEEKKPYASLVIDNSGDIAALIKQVQSALLSLANPR.

The DPCK domain maps to 2–197 (IIGITGGIAS…SALLSLANPR (196 aa)). 10-15 (ASGKST) serves as a coordination point for ATP.

This sequence belongs to the CoaE family.

The protein localises to the cytoplasm. It catalyses the reaction 3'-dephospho-CoA + ATP = ADP + CoA + H(+). It functions in the pathway cofactor biosynthesis; coenzyme A biosynthesis; CoA from (R)-pantothenate: step 5/5. Catalyzes the phosphorylation of the 3'-hydroxyl group of dephosphocoenzyme A to form coenzyme A. This Streptococcus pyogenes serotype M28 (strain MGAS6180) protein is Dephospho-CoA kinase.